A 334-amino-acid chain; its full sequence is Glyoxylate reductase (334 aa).

Residues 158 to 161 (FGRI), 180 to 182 (SRT), and 239 to 241 (IAR) contribute to the NADP(+) site. Catalysis depends on residues arginine 241 and glutamate 270. Histidine 288 acts as the Proton donor in catalysis. 288–290 (HIG) is a binding site for NADP(+).

Belongs to the D-isomer specific 2-hydroxyacid dehydrogenase family. GyaR subfamily. As to quaternary structure, homodimer.

It is found in the cytoplasm. The catalysed reaction is glycolate + NAD(+) = glyoxylate + NADH + H(+). The polypeptide is Glyoxylate reductase (Thermococcus gammatolerans (strain DSM 15229 / JCM 11827 / EJ3)).